We begin with the raw amino-acid sequence, 287 residues long: Polyamine aminopropyltransferase (287 aa).

A PABS domain is found at 5-238 (EIWYETLHAN…GIMTFAWASN (234 aa)). Q33 contributes to the S-methyl-5'-thioadenosine binding site. Spermidine contacts are provided by H64 and D88. S-methyl-5'-thioadenosine is bound by residues E108 and 140-141 (DG). D158 (proton acceptor) is an active-site residue. Spermidine is bound at residue 158–161 (DCTD). P165 contributes to the S-methyl-5'-thioadenosine binding site.

This sequence belongs to the spermidine/spermine synthase family. As to quaternary structure, homodimer or homotetramer.

Its subcellular location is the cytoplasm. The catalysed reaction is S-adenosyl 3-(methylsulfanyl)propylamine + putrescine = S-methyl-5'-thioadenosine + spermidine + H(+). It functions in the pathway amine and polyamine biosynthesis; spermidine biosynthesis; spermidine from putrescine: step 1/1. Its function is as follows. Catalyzes the irreversible transfer of a propylamine group from the amino donor S-adenosylmethioninamine (decarboxy-AdoMet) to putrescine (1,4-diaminobutane) to yield spermidine. This is Polyamine aminopropyltransferase from Pectobacterium atrosepticum (strain SCRI 1043 / ATCC BAA-672) (Erwinia carotovora subsp. atroseptica).